The following is a 316-amino-acid chain: ATP synthase gamma chain (316 aa).

This sequence belongs to the ATPase gamma chain family. F-type ATPases have 2 components, CF(1) - the catalytic core - and CF(0) - the membrane proton channel. CF(1) has five subunits: alpha(3), beta(3), gamma(1), delta(1), epsilon(1). CF(0) has three main subunits: a, b and c.

It is found in the cellular thylakoid membrane. Produces ATP from ADP in the presence of a proton gradient across the membrane. The gamma chain is believed to be important in regulating ATPase activity and the flow of protons through the CF(0) complex. This chain is ATP synthase gamma chain, found in Prochlorococcus marinus (strain MIT 9303).